Reading from the N-terminus, the 128-residue chain is Aspartate 1-decarboxylase (128 aa).

Serine 25 serves as the catalytic Schiff-base intermediate with substrate; via pyruvic acid. Serine 25 bears the Pyruvic acid (Ser) mark. Threonine 57 provides a ligand contact to substrate. The active-site Proton donor is the tyrosine 58. 73-75 (GAA) contacts substrate.

It belongs to the PanD family. As to quaternary structure, heterooctamer of four alpha and four beta subunits. Requires pyruvate as cofactor. In terms of processing, is synthesized initially as an inactive proenzyme, which is activated by self-cleavage at a specific serine bond to produce a beta-subunit with a hydroxyl group at its C-terminus and an alpha-subunit with a pyruvoyl group at its N-terminus.

The protein localises to the cytoplasm. It carries out the reaction L-aspartate + H(+) = beta-alanine + CO2. Its pathway is cofactor biosynthesis; (R)-pantothenate biosynthesis; beta-alanine from L-aspartate: step 1/1. In terms of biological role, catalyzes the pyruvoyl-dependent decarboxylation of aspartate to produce beta-alanine. The protein is Aspartate 1-decarboxylase of Chlorobium luteolum (strain DSM 273 / BCRC 81028 / 2530) (Pelodictyon luteolum).